The chain runs to 88 residues: Small ribosomal subunit protein bS16c (88 aa).

The protein belongs to the bacterial ribosomal protein bS16 family.

It is found in the plastid. The protein resides in the chloroplast. This Gossypium hirsutum (Upland cotton) protein is Small ribosomal subunit protein bS16c.